The sequence spans 195 residues: Protein M2-1 (195 aa).

The C3H1-type zinc finger occupies 1–28 (MSRRNPCKFEIRGHCLNGRRCHYSHNYF). Positions 32–49 (PHALLVRQNFMLNKILKS) are oligomerization. 2 positions are modified to phosphoserine; by host: Ser-58 and Ser-61. Residues 76–171 (IVGVLESYIG…KNTLDIHKSI (96 aa)) form a globular core region. The interval 126 to 163 (RVYNTVISYIESNRKNNKQTIHLLKRLPADVLKKTIKN) is binding to the phosphoprotein. Residues 172-194 (IISNPKESTVNDQNDQTKNNDIT) are disordered.

The protein belongs to the pneumoviridae M2-1 protein family. In terms of assembly, homotetramer. The homotetramer interacts with RNA. Interacts with the phosphoprotein (P); this interaction is required for protein M2-1 function, localization in host inclusion bodies. Formation of a complex host PP1/M2-1/P allows P to target host PP1 phosphatase to the M2-1 substrate. Interacts with the nucleoprotein (N). Interacts with the matrix protein (M); this interaction directs M localization to cytoplasmic inclusions comprising viral proteins L, N, P, and M2-1 and mediates M association with the nucleocapsid. Interacts with host RELA. Interacts with host PABPC1 (via C-terminus). In terms of processing, phosphorylated by host in infected cells. Only dephosphorylated M2-1 is competent for viral mRNA binding. Cyclic turnover of phosphorylation-dephosphorylation of M2-1 is required for efficient viral transcription.

Its subcellular location is the virion. The protein localises to the host cytoplasm. The protein resides in the host nucleus. In terms of biological role, acts as a tetrameric transcription processivity factor that binds in a competitive manner to RNA and the phosphoprotein (P) to prevent premature termination during transcription. Transcription anti-terminator that enhances readthrough of intergenic junctions during viral transcription. Preferentially binds to poly(A)-rich sequences. Plays a role in the association of the matrix protein with the nucleocapsid, which initiates assembly and budding. Also, can activate host NF-kappa-B through association with host RELA. In Human respiratory syncytial virus B (strain B1), this protein is Protein M2-1 (M2-1).